A 197-amino-acid polypeptide reads, in one-letter code: Glycerol-3-phosphate acyltransferase (197 aa).

The next 5 helical transmembrane spans lie at 6-26, 58-78, 82-102, 116-136, and 157-177; these read LFIV…AIIV, AITL…AHYL, MLNV…PIFF, ALLA…VFVA, and FYLI…CLWI.

It belongs to the PlsY family. Probably interacts with PlsX.

It localises to the cell inner membrane. It catalyses the reaction an acyl phosphate + sn-glycerol 3-phosphate = a 1-acyl-sn-glycero-3-phosphate + phosphate. The protein operates within lipid metabolism; phospholipid metabolism. Catalyzes the transfer of an acyl group from acyl-phosphate (acyl-PO(4)) to glycerol-3-phosphate (G3P) to form lysophosphatidic acid (LPA). This enzyme utilizes acyl-phosphate as fatty acyl donor, but not acyl-CoA or acyl-ACP. This is Glycerol-3-phosphate acyltransferase from Ruthia magnifica subsp. Calyptogena magnifica.